The sequence spans 630 residues: tRNA uridine 5-carboxymethylaminomethyl modification enzyme MnmG (630 aa).

FAD is bound at residue 15–20 (GAGHAG). 274–288 (GPRYCPSIEDKIVRF) provides a ligand contact to NAD(+).

Belongs to the MnmG family. In terms of assembly, homodimer. Heterotetramer of two MnmE and two MnmG subunits. It depends on FAD as a cofactor.

Its subcellular location is the cytoplasm. In terms of biological role, NAD-binding protein involved in the addition of a carboxymethylaminomethyl (cmnm) group at the wobble position (U34) of certain tRNAs, forming tRNA-cmnm(5)s(2)U34. The chain is tRNA uridine 5-carboxymethylaminomethyl modification enzyme MnmG from Alkaliphilus oremlandii (strain OhILAs) (Clostridium oremlandii (strain OhILAs)).